The following is an 855-amino-acid chain: Valine--tRNA ligase (855 aa).

Residues 42–52 (PTISGKLHIGH) carry the 'HIGH' region motif. The 'KMSKS' region signature appears at 574–578 (KMSKS). Lysine 577 contributes to the ATP binding site.

This sequence belongs to the class-I aminoacyl-tRNA synthetase family. ValS type 2 subfamily. As to quaternary structure, monomer.

It is found in the cytoplasm. The catalysed reaction is tRNA(Val) + L-valine + ATP = L-valyl-tRNA(Val) + AMP + diphosphate. Functionally, catalyzes the attachment of valine to tRNA(Val). As ValRS can inadvertently accommodate and process structurally similar amino acids such as threonine, to avoid such errors, it has a 'posttransfer' editing activity that hydrolyzes mischarged Thr-tRNA(Val) in a tRNA-dependent manner. The protein is Valine--tRNA ligase of Wolbachia sp. subsp. Brugia malayi (strain TRS).